We begin with the raw amino-acid sequence, 813 residues long: Calpain-7 (813 aa).

The residue at position 1 (Met-1) is an N-acetylmethionine. Residue Thr-95 is modified to Phosphothreonine. The Calpain catalytic domain maps to 232 to 540; it reads RERFAYPMPF…YDVIYLSWNP (309 aa). Catalysis depends on residues Cys-290, His-458, and Asn-478. Positions 541-701 are domain III; it reads GLFKESTCIH…INGKWSGQSA (161 aa). The segment at 702–813 is domain N; the sequence is GGCGNFQETH…IIPIKITQLQ (112 aa).

It belongs to the peptidase C2 family. In terms of tissue distribution, ubiquitous.

Its subcellular location is the nucleus. Functionally, calcium-regulated non-lysosomal thiol-protease. The chain is Calpain-7 (CAPN7) from Homo sapiens (Human).